Here is a 1357-residue protein sequence, read N- to C-terminus: DNA-directed RNA polymerase subunit beta (1357 aa).

Belongs to the RNA polymerase beta chain family. As to quaternary structure, the RNAP catalytic core consists of 2 alpha, 1 beta, 1 beta' and 1 omega subunit. When a sigma factor is associated with the core the holoenzyme is formed, which can initiate transcription.

It catalyses the reaction RNA(n) + a ribonucleoside 5'-triphosphate = RNA(n+1) + diphosphate. Functionally, DNA-dependent RNA polymerase catalyzes the transcription of DNA into RNA using the four ribonucleoside triphosphates as substrates. This chain is DNA-directed RNA polymerase subunit beta, found in Pseudomonas putida (Arthrobacter siderocapsulatus).